Consider the following 273-residue polypeptide: Type IV secretion system protein PtlF homolog (273 aa).

An N-terminal signal peptide occupies residues 1 to 20 (MMAARMMAAGLAATALSAHA).

The protein belongs to the TrbG/VirB9 family.

Its subcellular location is the cell outer membrane. The sequence is that of Type IV secretion system protein PtlF homolog (ptlF) from Bordetella bronchiseptica (strain ATCC BAA-588 / NCTC 13252 / RB50) (Alcaligenes bronchisepticus).